Reading from the N-terminus, the 240-residue chain is Glutamine transport ATP-binding protein GlnQ (240 aa).

An ABC transporter domain is found at 2–236 (IEFKNVSKHF…PPSQRLQEFL (235 aa)). 34–41 (GPSGSGKS) lines the ATP pocket.

Belongs to the ABC transporter superfamily. As to quaternary structure, heterotetramer with 2 subunits of GlnQ and 2 subunits of GlnP.

It localises to the cell inner membrane. Functionally, part of the binding-protein-dependent transport system for glutamine. Probably responsible for energy coupling to the transport system. The polypeptide is Glutamine transport ATP-binding protein GlnQ (glnQ) (Escherichia coli (strain K12)).